Reading from the N-terminus, the 525-residue chain is MSL complex subunit 3 (525 aa).

The 60-residue stretch at 13–72 (SGEKVLCFEPDPTKARVLYDAKIIDVIIGKDEKGRKIPEYLIHFNGWNRSWDRWAAEEHV) folds into the Tudor-knot domain. 2 disordered regions span residues 119 to 148 (KEKSKNDENSVSSTCHESCGEKNGGIKEHR) and 302 to 383 (TTTT…DTSA). A compositionally biased stretch (basic and acidic residues) spans 136 to 146 (SCGEKNGGIKE). Residues 172-521 (DERTITIDIP…CEAHYSTKNP (350 aa)) enclose the MRG domain. Positions 294–444 (FFLPIKESTT…WKLVPDNYPP (151 aa)) are required for the histone acetyltransferase activity of the MSL complex. Phosphoserine occurs at positions 313 and 315. A compositionally biased stretch (low complexity) spans 320–332 (NPSTPQSTESQPP). 2 positions are modified to phosphoserine: Ser-371 and Ser-404. Position 409 is a phosphothreonine (Thr-409). Residues Ser-411 and Ser-415 each carry the phosphoserine modification.

Component of the MSL histone acetyltransferase complex at least composed of the KAT8/MOF, MSL1/hampin, MSL2 and MSL3. Interacts (via the MRG domain) with MSL1 and KAT8/MOF. As to expression, in testis, expression is mostly restricted to the spermatocyte stage and only in a small portion of spermatogonia.

The protein resides in the nucleus. Non-catalytic component of the MSL histone acetyltransferase complex, a multiprotein complex that mediates the majority of histone H4 acetylation at 'Lys-16' (H4K16ac), an epigenetic mark that prevents chromatin compaction. The MSL complex is required for chromosome stability and genome integrity by maintaining homeostatic levels of H4K16ac. The MSL complex is also involved in gene dosage by promoting up-regulation of genes expressed by the X chromosome. X up-regulation is required to compensate for autosomal biallelic expression. The MSL complex also participates in gene dosage compensation by promoting expression of Tsix non-coding RNA. Acts as a histone reader that specifically recognizes and binds histone H4 monomethylated at 'Lys-20' (H4K20Me1) in a DNA-dependent manner and is proposed to be involved in chromosomal targeting of the MSL complex. May play a role X inactivation in females. The polypeptide is MSL complex subunit 3 (Mus musculus (Mouse)).